The chain runs to 365 residues: Eukaryotic translation initiation factor 3 subunit H (365 aa).

An MPN domain is found at 15 to 166 (ILLDSLVVMK…LRAWRLSTAA (152 aa)).

This sequence belongs to the eIF-3 subunit H family. As to quaternary structure, component of the eukaryotic translation initiation factor 3 (eIF-3) complex.

Its subcellular location is the cytoplasm. Component of the eukaryotic translation initiation factor 3 (eIF-3) complex, which is involved in protein synthesis of a specialized repertoire of mRNAs and, together with other initiation factors, stimulates binding of mRNA and methionyl-tRNAi to the 40S ribosome. The eIF-3 complex specifically targets and initiates translation of a subset of mRNAs involved in cell proliferation. The chain is Eukaryotic translation initiation factor 3 subunit H from Caenorhabditis elegans.